A 367-amino-acid polypeptide reads, in one-letter code: Forkhead box protein I1-B (367 aa).

Disordered regions lie at residues Met1–His21 and Asp213–Val274. A DNA-binding region (fork-head) is located at residues Arg128–Lys222. A compositionally biased stretch (basic and acidic residues) spans Ala233–Glu246. Polar residues predominate over residues Thr252–Val274.

As to expression, initially localized to the animal hemisphere (the presumptive ectoderm) of early-mid blastula embryos. Becomes restricted to head placodes, excluding the otic placodes, by the tailbud stages.

The protein resides in the nucleus. Its function is as follows. Transcription factor. Essential for ventral specification of the early cephalic (head) ectoderm during gastrulation, playing a role in the 'non-neural' versus 'neural' cell fate choice. Binds to DNA via the target sequence 5'-[AG]TAAA[CT]A-3', with 5'-ATAAACA-3' being the preferred binding site. This is Forkhead box protein I1-B (foxi1-b) from Xenopus laevis (African clawed frog).